The following is a 204-amino-acid chain: Lymphotoxin-alpha (204 aa).

The N-terminal stretch at 1–33 (MTPPGRLYLLRVRSAPVLLLLGLLLGLPPGAQG) is a signal peptide. The 143-residue stretch at 62 to 204 (PAAHLIGDPS…SSVFFGAFAL (143 aa)) folds into the THD domain. Asn-95 carries an N-linked (GlcNAc...) asparagine glycan. Cys-119 and Cys-155 form a disulfide bridge.

It belongs to the tumor necrosis factor family. As to quaternary structure, homotrimer, and heterotrimer of either two LTB and one LTA subunits or (less prevalent) two LTA and one LTB subunits. Interacts with TNFRSF14.

The protein resides in the secreted. The protein localises to the membrane. Functionally, cytokine that in its homotrimeric form binds to TNFRSF1A/TNFR1, TNFRSF1B/TNFBR and TNFRSF14/HVEM. In its heterotrimeric form with LTB binds to TNFRSF3/LTBR. Lymphotoxin is produced by lymphocytes and is cytotoxic for a wide range of tumor cells in vitro and in vivo. The chain is Lymphotoxin-alpha (LTA) from Canis lupus familiaris (Dog).